A 32-amino-acid polypeptide reads, in one-letter code: Delta-conotoxin-like MVID (32 aa).

3 disulfide bridges follow: Cys3–Cys18, Cys10–Cys22, and Cys17–Cys27. At Pro14 the chain carries 4-hydroxyproline.

Belongs to the conotoxin O1 superfamily. As to expression, expressed by the venom duct.

Its subcellular location is the secreted. Functionally, delta-conotoxins bind to site 6 of voltage-gated sodium channels (Nav) and inhibit the inactivation process. The protein is Delta-conotoxin-like MVID of Conus magus (Magical cone).